Here is a 506-residue protein sequence, read N- to C-terminus: Galactose/methyl galactoside import ATP-binding protein MglA (506 aa).

2 consecutive ABC transporter domains span residues 14–249 (LEMK…VGRS) and 264–506 (VMLE…SLYL). 46–53 (GENGAGKS) is an ATP binding site.

It belongs to the ABC transporter superfamily. Galactose/methyl galactoside importer (TC 3.A.1.2.3) family. The complex is composed of one ATP-binding protein (MglA), two transmembrane proteins (MglC) and a solute-binding protein (MglB).

It is found in the cell inner membrane. It carries out the reaction D-galactose(out) + ATP + H2O = D-galactose(in) + ADP + phosphate + H(+). The catalysed reaction is methyl beta-D-galactoside(out) + ATP + H2O = methyl beta-D-galactoside(in) + ADP + phosphate + H(+). In terms of biological role, part of the ABC transporter complex MglABC involved in galactose/methyl galactoside import. Responsible for energy coupling to the transport system. This is Galactose/methyl galactoside import ATP-binding protein MglA from Sodalis glossinidius (strain morsitans).